The sequence spans 269 residues: CUE domain-containing protein 2-B (269 aa).

The segment at 110–130 is disordered; it reads ASPSEKTATEPLEGAVAQDKD. Residues 131–174 enclose the CUE domain; that stretch reads DPKTGVDLLLEIFPSCTITQAQTALSMAKGDLEDAVQIIVDGKV.

The protein belongs to the CUEDC2 family. Phosphorylated.

Its subcellular location is the cytoplasm. It localises to the nucleus. Its function is as follows. May play a role in targeting proteins for ubiquitination and subsequent proteasomal degradation. The sequence is that of CUE domain-containing protein 2-B (cuedc2-b) from Xenopus laevis (African clawed frog).